We begin with the raw amino-acid sequence, 432 residues long: Histidinol dehydrogenase (432 aa).

3 residues coordinate substrate: serine 240, glutamine 262, and histidine 265. Zn(2+) contacts are provided by glutamine 262 and histidine 265. Active-site proton acceptor residues include glutamate 330 and histidine 331. The substrate site is built by histidine 331, aspartate 364, glutamate 418, and histidine 423. Aspartate 364 lines the Zn(2+) pocket. Histidine 423 is a binding site for Zn(2+).

The protein belongs to the histidinol dehydrogenase family. The cofactor is Zn(2+).

The enzyme catalyses L-histidinol + 2 NAD(+) + H2O = L-histidine + 2 NADH + 3 H(+). It participates in amino-acid biosynthesis; L-histidine biosynthesis; L-histidine from 5-phospho-alpha-D-ribose 1-diphosphate: step 9/9. In terms of biological role, catalyzes the sequential NAD-dependent oxidations of L-histidinol to L-histidinaldehyde and then to L-histidine. This Wolinella succinogenes (strain ATCC 29543 / DSM 1740 / CCUG 13145 / JCM 31913 / LMG 7466 / NCTC 11488 / FDC 602W) (Vibrio succinogenes) protein is Histidinol dehydrogenase.